A 100-amino-acid chain; its full sequence is MAKKSLIYREKKRQKLEEKYHLIRRSSKKEISQIPSLSEKWKIHGKLQSPPRNSAPTRLHRRCFSTGRPRANYRDFGLSGHILREMVHACLLPGATRSSW.

It belongs to the universal ribosomal protein uS14 family. Part of the 30S ribosomal subunit.

The protein localises to the plastid. It is found in the chloroplast. Functionally, binds 16S rRNA, required for the assembly of 30S particles. The chain is Small ribosomal subunit protein uS14c from Aethionema grandiflorum (Persian stone-cress).